A 293-amino-acid chain; its full sequence is Probable porphobilinogen deaminase (293 aa).

The residue at position 233 (Cys233) is an S-(dipyrrolylmethanemethyl)cysteine.

It belongs to the HMBS family. It depends on dipyrromethane as a cofactor.

It carries out the reaction 4 porphobilinogen + H2O = hydroxymethylbilane + 4 NH4(+). It functions in the pathway porphyrin-containing compound metabolism; protoporphyrin-IX biosynthesis; coproporphyrinogen-III from 5-aminolevulinate: step 2/4. In terms of biological role, tetrapolymerization of the monopyrrole PBG into the hydroxymethylbilane pre-uroporphyrinogen in several discrete steps. This chain is Probable porphobilinogen deaminase, found in Saccharolobus islandicus (strain L.S.2.15 / Lassen #1) (Sulfolobus islandicus).